The chain runs to 342 residues: Phosphate acyltransferase (342 aa).

Belongs to the PlsX family. Homodimer. Probably interacts with PlsY.

It is found in the cytoplasm. The catalysed reaction is a fatty acyl-[ACP] + phosphate = an acyl phosphate + holo-[ACP]. It functions in the pathway lipid metabolism; phospholipid metabolism. Its function is as follows. Catalyzes the reversible formation of acyl-phosphate (acyl-PO(4)) from acyl-[acyl-carrier-protein] (acyl-ACP). This enzyme utilizes acyl-ACP as fatty acyl donor, but not acyl-CoA. The protein is Phosphate acyltransferase of Legionella pneumophila (strain Corby).